The chain runs to 286 residues: Polyamine aminopropyltransferase (286 aa).

The PABS domain maps to Pro6–Asp239. Gln34 serves as a coordination point for S-methyl-5'-thioadenosine. Spermidine is bound by residues His65 and Asp89. Residues Glu109 and Asp140 to Gly141 contribute to the S-methyl-5'-thioadenosine site. Asp159 acts as the Proton acceptor in catalysis. Asp159–Asp162 provides a ligand contact to spermidine. Residue Pro166 participates in S-methyl-5'-thioadenosine binding.

Belongs to the spermidine/spermine synthase family. Homodimer or homotetramer. Homodimer.

The protein localises to the cytoplasm. It carries out the reaction S-adenosyl 3-(methylsulfanyl)propylamine + putrescine = S-methyl-5'-thioadenosine + spermidine + H(+). The protein operates within amine and polyamine biosynthesis; spermidine biosynthesis; spermidine from putrescine: step 1/1. In terms of biological role, catalyzes the irreversible transfer of a propylamine group from the amino donor S-adenosylmethioninamine (decarboxy-AdoMet) to putrescine (1,4-diaminobutane) to yield spermidine. In Synechococcus elongatus (strain ATCC 33912 / PCC 7942 / FACHB-805) (Anacystis nidulans R2), this protein is Polyamine aminopropyltransferase.